The sequence spans 618 residues: Beta-glucosidase C (618 aa).

The N-terminal stretch at 1–19 is a signal peptide; the sequence is MRVDSTVLALVALATDCLG. 5 N-linked (GlcNAc...) asparagine glycosylation sites follow: N40, N82, N104, N211, and N263. D330 is a catalytic residue. Residues N417, N448, N477, N482, N502, and N517 are each glycosylated (N-linked (GlcNAc...) asparagine).

Belongs to the glycosyl hydrolase 3 family.

Its subcellular location is the secreted. It catalyses the reaction Hydrolysis of terminal, non-reducing beta-D-glucosyl residues with release of beta-D-glucose.. It functions in the pathway glycan metabolism; cellulose degradation. Beta-glucosidases are one of a number of cellulolytic enzymes involved in the degradation of cellulosic biomass. Catalyzes the last step releasing glucose from the inhibitory cellobiose. The sequence is that of Beta-glucosidase C (bglC) from Emericella nidulans (strain FGSC A4 / ATCC 38163 / CBS 112.46 / NRRL 194 / M139) (Aspergillus nidulans).